The chain runs to 33 residues: Cysteine-rich venom protein (33 aa).

The tract at residues 1–33 (NVDFNSESTRRKKKQKEIVDLHNSLRRRVSPTA) is disordered. Residues 24-33 (SLRRRVSPTA) are compositionally biased toward basic residues.

Belongs to the CRISP family. Post-translationally, contains 8 disulfide bonds. As to expression, expressed by the venom gland.

It localises to the secreted. Blocks contraction of smooth muscle elicited by high potassium-induced depolarization, but does not block caffeine-stimulated contraction. May target voltage-gated calcium channels on smooth muscle (Cav). The chain is Cysteine-rich venom protein from Naja naja (Indian cobra).